The chain runs to 311 residues: Tyrosine recombinase XerD (311 aa).

A Core-binding (CB) domain is found at 1–83 (MEFIAQFLEM…TIKSYYAFLI (83 aa)). A Tyr recombinase domain is found at 104 to 299 (KLPIILSIDQ…HTNHLKKALL (196 aa)). Active-site residues include arginine 145, lysine 176, histidine 251, arginine 254, and histidine 277. Tyrosine 286 functions as the O-(3'-phospho-DNA)-tyrosine intermediate in the catalytic mechanism.

The protein belongs to the 'phage' integrase family. XerD subfamily. As to quaternary structure, forms a cyclic heterotetrameric complex composed of two molecules of XerC and two molecules of XerD.

It localises to the cytoplasm. Site-specific tyrosine recombinase, which acts by catalyzing the cutting and rejoining of the recombining DNA molecules. The XerC-XerD complex is essential to convert dimers of the bacterial chromosome into monomers to permit their segregation at cell division. It also contributes to the segregational stability of plasmids. This chain is Tyrosine recombinase XerD, found in Rickettsia prowazekii (strain Madrid E).